The primary structure comprises 864 residues: Leucine--tRNA ligase (864 aa).

The 'HIGH' region signature appears at 50 to 60 (PYPSGKIHMGH). The 'KMSKS' region signature appears at 622–626 (KMSKS). K625 serves as a coordination point for ATP.

This sequence belongs to the class-I aminoacyl-tRNA synthetase family.

The protein resides in the cytoplasm. The catalysed reaction is tRNA(Leu) + L-leucine + ATP = L-leucyl-tRNA(Leu) + AMP + diphosphate. This Acidiphilium cryptum (strain JF-5) protein is Leucine--tRNA ligase.